A 185-amino-acid chain; its full sequence is Transcription termination/antitermination protein NusG (185 aa).

One can recognise a KOW domain in the interval 133–161; the sequence is PGEEVRVTEGPFADFNGTVEEVDYEKGRL.

It belongs to the NusG family.

Functionally, participates in transcription elongation, termination and antitermination. The polypeptide is Transcription termination/antitermination protein NusG (Haemophilus influenzae (strain ATCC 51907 / DSM 11121 / KW20 / Rd)).